The primary structure comprises 296 residues: Probable porphobilinogen deaminase (296 aa).

Cys-241 carries the S-(dipyrrolylmethanemethyl)cysteine modification.

This sequence belongs to the HMBS family. Dipyrromethane is required as a cofactor.

The catalysed reaction is 4 porphobilinogen + H2O = hydroxymethylbilane + 4 NH4(+). It participates in porphyrin-containing compound metabolism; protoporphyrin-IX biosynthesis; coproporphyrinogen-III from 5-aminolevulinate: step 2/4. Tetrapolymerization of the monopyrrole PBG into the hydroxymethylbilane pre-uroporphyrinogen in several discrete steps. The chain is Probable porphobilinogen deaminase from Pyrobaculum calidifontis (strain DSM 21063 / JCM 11548 / VA1).